Consider the following 336-residue polypeptide: Protein REVEILLE 7-like (336 aa).

Residues 60–114 form the HTH myb-type domain; that stretch reads TVTKQREKWSEEEHDRFLEAIKLYGRGWRQIQEHIGTKTAVQIRSHAQKFFSKMA. The segment at residues 87–110 is a DNA-binding region (H-T-H motif); the sequence is WRQIQEHIGTKTAVQIRSHAQKFF. Residues 114 to 197 are disordered; sequence AQEADSRSEG…KQPFKDDSDI (84 aa). Positions 134–144 are enriched in basic residues; sequence RPKRKPAHPYP. Pro residues predominate over residues 145–158; that stretch reads RKSPVPYTQSPPPN. Residues 167–189 are compositionally biased toward polar residues; it reads KSPTSVLSSFGSEDQNNYTTSKQ.

It is found in the nucleus. Probable transcription factor. The protein is Protein REVEILLE 7-like (RVE7L) of Arabidopsis thaliana (Mouse-ear cress).